We begin with the raw amino-acid sequence, 434 residues long: Putative B3 domain-containing protein Os04g0347400 (434 aa).

DNA-binding regions (TF-B3) lie at residues 27-124 (SFHK…FDTT), 150-246 (KPQF…FGIN), and 326-432 (WIKK…DRVE).

The protein localises to the nucleus. The chain is Putative B3 domain-containing protein Os04g0347400 from Oryza sativa subsp. japonica (Rice).